A 724-amino-acid chain; its full sequence is Catalase-peroxidase (724 aa).

The tryptophyl-tyrosyl-methioninium (Trp-Tyr) (with M-252) cross-link spans 98 to 226 (WHAAGSYRTA…LAAVQMGLIY (129 aa)). The Proton acceptor role is filled by His-99. A cross-link (tryptophyl-tyrosyl-methioninium (Tyr-Met) (with W-98)) is located at residues 226–252 (YVNPQGVNGEPDPLRTALHVRETFARM). Heme b is bound at residue His-267.

This sequence belongs to the peroxidase family. Peroxidase/catalase subfamily. As to quaternary structure, homodimer or homotetramer. The cofactor is heme b. Formation of the three residue Trp-Tyr-Met cross-link is important for the catalase, but not the peroxidase activity of the enzyme.

The catalysed reaction is H2O2 + AH2 = A + 2 H2O. It carries out the reaction 2 H2O2 = O2 + 2 H2O. In terms of biological role, bifunctional enzyme with both catalase and broad-spectrum peroxidase activity. The protein is Catalase-peroxidase of Cereibacter sphaeroides (strain ATCC 17025 / ATH 2.4.3) (Rhodobacter sphaeroides).